The following is a 607-amino-acid chain: Runt-related transcription factor 2 (607 aa).

The tract at residues 1-88 is interaction with IFI204; the sequence is MLHSPHKQPQ…TMASNSLFSA (88 aa). Low complexity predominate over residues 100–112; that stretch reads PSTSRRFSPPSSS. Residues 100 to 126 are disordered; it reads PSTSRRFSPPSSSLQPGKMSDVSPVVA. The Runt domain occupies 187–315; that stretch reads TMVEIIADHP…TVDGPREPRR (129 aa). The segment at 242-258 is required for interaction with FOXO1; it reads VMAGNDENYSAELRNAS. The segment at 307–430 is disordered; sequence VDGPREPRRH…VPRRISDDDT (124 aa). Lys-324 participates in a covalent cross-link: Glycyl lysine isopeptide (Lys-Gly) (interchain with G-Cter in SUMO2). Asymmetric dimethylarginine is present on Arg-353. The segment covering 353-412 has biased composition (polar residues); the sequence is RPSLNSAPSPFNPQGQSQITDPRQAQSSPPWSYDQSYPSYLSQMTSPSIHSTTPLSSTRG. The segment at 422 to 525 is interaction with KAT6A; it reads PRRISDDDTA…SQSQSGPFQT (104 aa). The tract at residues 460–554 is interaction with KAT6B; the sequence is RQFPSISSLT…VPGGDRSPSR (95 aa). Ser-537 bears the Phosphoserine; by CDK1 mark. The segment at 548–607 is disordered; that stretch reads GDRSPSRMVPPCTTTSNGSTLLNPNLPNQNDGVDADGSHSSSPTVLNSSGRMDESVWRPY. 2 stretches are compositionally biased toward polar residues: residues 559-578 and 585-597; these read CTTTSNGSTLLNPNLPNQND and SHSSSPTVLNSSG. The span at 598-607 shows a compositional bias: basic and acidic residues; that stretch reads RMDESVWRPY.

Heterodimer of an alpha and a beta subunit. The alpha subunit binds DNA as a monomer and through the Runt domain. DNA-binding is increased by heterodimerization. Interacts with XRCC6 (Ku70) and XRCC5 (Ku80). Interacts with CCNB1, KAT6A and KAT6B. Interacts with HIVEP3. Interacts with IFI204. Interaction with SATB2; the interaction results in enhanced DNA binding and transactivation by these transcription factors. Binds to HIPK3. Interacts with FOXO1 (via a C-terminal region); the interaction inhibits RUNX2 transcriptional activity towards BGLAP. Interacts with FOXP3. Interacts with TMEM119. Interacts with OLFM2. Interacts with IPO7; the interaction inhibits RUNX2 nuclear translocation in osteoblasts. In terms of assembly, interacts with DDX5. Phosphorylated; probably by MAP kinases (MAPK). Phosphorylation by HIPK3 is required for the SPEN/MINT and FGF2 transactivation during osteoblastic differentiation. Phosphorylation at Ser-537 by CDK1 promotes endothelial cell proliferation required for tumor angiogenesis probably by facilitating cell cycle progression. Found in thymus and testis, T-cell lines but not in B-cell lines. Isoform 2 is exclusively found in bone, particularly in osteoblasts; isoforms 3 and 4 are expressed in T-cell lines; isoforms 5, 6, 7, 8 and 9 can be found in osteoblasts and osteosarcoma cell lines.

The protein localises to the nucleus. It is found in the cytoplasm. Functionally, transcription factor involved in osteoblastic differentiation and skeletal morphogenesis. Essential for the maturation of osteoblasts and both intramembranous and endochondral ossification. CBF binds to the core site, 5'-PYGPYGGT-3', of a number of enhancers and promoters, including murine leukemia virus, polyomavirus enhancer, T-cell receptor enhancers, osteocalcin, osteopontin, bone sialoprotein, alpha 1(I) collagen, LCK, IL-3 and GM-CSF promoters. Inhibits KAT6B-dependent transcriptional activation. In osteoblasts, supports transcription activation: synergizes with SPEN/MINT to enhance FGFR2-mediated activation of the osteocalcin FGF-responsive element (OCFRE). The sequence is that of Runt-related transcription factor 2 (Runx2) from Mus musculus (Mouse).